The sequence spans 344 residues: Heat-inducible transcription repressor HrcA (344 aa).

Belongs to the HrcA family.

Functionally, negative regulator of class I heat shock genes (grpE-dnaK-dnaJ and groELS operons). Prevents heat-shock induction of these operons. The polypeptide is Heat-inducible transcription repressor HrcA (Streptococcus pneumoniae (strain Taiwan19F-14)).